Reading from the N-terminus, the 230-residue chain is Large ribosomal subunit protein uL1 (230 aa).

It belongs to the universal ribosomal protein uL1 family. In terms of assembly, part of the 50S ribosomal subunit.

Its function is as follows. Binds directly to 23S rRNA. The L1 stalk is quite mobile in the ribosome, and is involved in E site tRNA release. Protein L1 is also a translational repressor protein, it controls the translation of the L11 operon by binding to its mRNA. This chain is Large ribosomal subunit protein uL1, found in Paramagnetospirillum magneticum (strain ATCC 700264 / AMB-1) (Magnetospirillum magneticum).